The following is a 467-amino-acid chain: ATP-dependent protease ATPase subunit HslU (467 aa).

ATP contacts are provided by residues V22 and 64–69 (GVGKTE). The interval 149–192 (QTNNPLESLFGGAIPNFGQNNEDEEEPPTEEIKTKRSEIKRQLE) is disordered. A compositionally biased stretch (basic and acidic residues) spans 178–192 (EEIKTKRSEIKRQLE). ATP contacts are provided by D280, E345, and R417.

This sequence belongs to the ClpX chaperone family. HslU subfamily. A double ring-shaped homohexamer of HslV is capped on each side by a ring-shaped HslU homohexamer. The assembly of the HslU/HslV complex is dependent on binding of ATP.

It localises to the cytoplasm. In terms of biological role, ATPase subunit of a proteasome-like degradation complex; this subunit has chaperone activity. The binding of ATP and its subsequent hydrolysis by HslU are essential for unfolding of protein substrates subsequently hydrolyzed by HslV. HslU recognizes the N-terminal part of its protein substrates and unfolds these before they are guided to HslV for hydrolysis. The polypeptide is ATP-dependent protease ATPase subunit HslU (Staphylococcus aureus (strain MW2)).